Reading from the N-terminus, the 208-residue chain is Uracil phosphoribosyltransferase (208 aa).

5-phospho-alpha-D-ribose 1-diphosphate-binding positions include R78, R103, and 130–138 (DPMLATGGS). Residues I193 and 198–200 (GDA) contribute to the uracil site. Position 199 (D199) interacts with 5-phospho-alpha-D-ribose 1-diphosphate.

It belongs to the UPRTase family. The cofactor is Mg(2+).

The enzyme catalyses UMP + diphosphate = 5-phospho-alpha-D-ribose 1-diphosphate + uracil. Its pathway is pyrimidine metabolism; UMP biosynthesis via salvage pathway; UMP from uracil: step 1/1. Allosterically activated by GTP. In terms of biological role, catalyzes the conversion of uracil and 5-phospho-alpha-D-ribose 1-diphosphate (PRPP) to UMP and diphosphate. This chain is Uracil phosphoribosyltransferase, found in Vibrio parahaemolyticus serotype O3:K6 (strain RIMD 2210633).